Consider the following 320-residue polypeptide: MKVLWAALLVAFLAGCQGKVEQVVEPELEPELEPHQQADWQSGQPWELALGRFWDYLRWVQTLSEQVQEELLSSQVTQELTALMEETMKELKAYKSELEEQLSPVAEETRARLSKELQAAQARLGADMEDVRSRLAQYRSEVQAMLGQSTDELRARLASHLRKLRKRLLRDVDDLQKRLAVYQAGAREGAERGVSAIRERLGTLVEQGRARAATVGSSLASQPLQERAQAWGERLRARMEEVGSRTRDRLDEVKEQVEEVRAKLEEQAQQMRLQAEAFQARLKSWFEPLVEDMQRQWAGLVEKVQAAVGASTTPVPSDNH.

Positions 1-18 are cleaved as a signal peptide; that stretch reads MKVLWAALLVAFLAGCQG. A run of 8 repeats spans residues 82-103, 104-125, 126-147, 148-169, 170-191, 192-213, 214-236, and 237-258. Residues 82-258 are 8 X 22 AA approximate tandem repeats; the sequence is ALMEETMKEL…RLDEVKEQVE (177 aa). Residue M145 is modified to Methionine sulfoxide. S149 is subject to Phosphoserine. The segment at 160–170 is LDL and other lipoprotein receptors binding; the sequence is HLRKLRKRLLR. Residue 164 to 167 coordinates heparin; it reads LRKR. Positions 212–293 are lipid-binding and lipoprotein association; that stretch reads AATVGSSLAS…SWFEPLVEDM (82 aa). The O-linked (GalNAc...) threonine glycan is linked to T214. 232–239 provides a ligand contact to heparin; it reads GERLRARM. The homooligomerization stretch occupies residues 269 to 320; the sequence is QQMRLQAEAFQARLKSWFEPLVEDMQRQWAGLVEKVQAAVGASTTPVPSDNH. Positions 281–293 are specificity for association with VLDL; it reads RLKSWFEPLVEDM.

Belongs to the apolipoprotein A1/A4/E family. As to quaternary structure, homotetramer. May interact with ABCA1; functionally associated with ABCA1 in the biogenesis of HDLs. May interact with APP/A4 amyloid-beta peptide; the interaction is extremely stable in vitro but its physiological significance is unclear. May interact with MAPT. May interact with MAP2. In the cerebrospinal fluid, interacts with secreted SORL1. Interacts with PMEL; this allows the loading of PMEL luminal fragment on ILVs to induce fibril nucleation. In terms of processing, APOE exists as multiple glycosylated and sialylated glycoforms within cells and in plasma. The extent of glycosylation and sialylation are tissue and context specific. Glycated in plasma VLDL. Post-translationally, phosphorylated by FAM20C in the extracellular medium.

The protein resides in the secreted. It localises to the extracellular space. The protein localises to the extracellular matrix. Its subcellular location is the extracellular vesicle. It is found in the endosome. The protein resides in the multivesicular body. APOE is an apolipoprotein, a protein associating with lipid particles, that mainly functions in lipoprotein-mediated lipid transport between organs via the plasma and interstitial fluids. APOE is a core component of plasma lipoproteins and is involved in their production, conversion and clearance. Apolipoproteins are amphipathic molecules that interact both with lipids of the lipoprotein particle core and the aqueous environment of the plasma. As such, APOE associates with chylomicrons, chylomicron remnants, very low density lipoproteins (VLDL) and intermediate density lipoproteins (IDL) but shows a preferential binding to high-density lipoproteins (HDL). It also binds a wide range of cellular receptors including the LDL receptor/LDLR, the LDL receptor-related proteins LRP1, LRP2 and LRP8 and the very low-density lipoprotein receptor/VLDLR that mediate the cellular uptake of the APOE-containing lipoprotein particles. Finally, APOE also has a heparin-binding activity and binds heparan-sulfate proteoglycans on the surface of cells, a property that supports the capture and the receptor-mediated uptake of APOE-containing lipoproteins by cells. A main function of APOE is to mediate lipoprotein clearance through the uptake of chylomicrons, VLDLs, and HDLs by hepatocytes. APOE is also involved in the biosynthesis by the liver of VLDLs as well as their uptake by peripheral tissues ensuring the delivery of triglycerides and energy storage in muscle, heart and adipose tissues. By participating in the lipoprotein-mediated distribution of lipids among tissues, APOE plays a critical role in plasma and tissues lipid homeostasis. APOE is also involved in two steps of reverse cholesterol transport, the HDLs-mediated transport of cholesterol from peripheral tissues to the liver, and thereby plays an important role in cholesterol homeostasis. First, it is functionally associated with ABCA1 in the biogenesis of HDLs in tissues. Second, it is enriched in circulating HDLs and mediates their uptake by hepatocytes. APOE also plays an important role in lipid transport in the central nervous system, regulating neuron survival and sprouting. This is Apolipoprotein E (APOE) from Cebus capucinus (White-faced sapajou).